Consider the following 289-residue polypeptide: Cysteine-rich venom protein Mr30 (289 aa).

An N-terminal signal peptide occupies residues 1 to 24 (MLSTMQTVGAILMLSIVFVAGTKR). The residue at position 33 (E33) is a 4-carboxyglutamate. One can recognise an SCP domain in the interval 62–184 (VRMHNVIRAT…GEDRYFVCNY (123 aa)).

The protein belongs to the CRISP family. Contains 11 disulfide bonds. Expressed by the venom duct.

The protein localises to the secreted. In terms of biological role, has no proteolytic activity. The protein is Cysteine-rich venom protein Mr30 of Conus marmoreus (Marble cone).